Consider the following 436-residue polypeptide: T-box transcription factor T (436 aa).

The T-box DNA-binding region spans 51 to 219 (LWLRFKELTN…YNPFAKAFLD (169 aa)).

Monomer. Binds DNA as a monomer.

The protein resides in the nucleus. Its function is as follows. Involved in the transcriptional regulation of genes required for mesoderm formation and differentiation. Binds to a palindromic T site 5'-TTCACACCTAGGTGTGAA-3' DNA sequence and activates gene transcription when bound to such a site. This Mus musculus (Mouse) protein is T-box transcription factor T.